The primary structure comprises 257 residues: Imidazole glycerol phosphate synthase subunit HisF (257 aa).

Active-site residues include Asp-11 and Asp-130.

The protein belongs to the HisA/HisF family. In terms of assembly, heterodimer of HisH and HisF.

It localises to the cytoplasm. The enzyme catalyses 5-[(5-phospho-1-deoxy-D-ribulos-1-ylimino)methylamino]-1-(5-phospho-beta-D-ribosyl)imidazole-4-carboxamide + L-glutamine = D-erythro-1-(imidazol-4-yl)glycerol 3-phosphate + 5-amino-1-(5-phospho-beta-D-ribosyl)imidazole-4-carboxamide + L-glutamate + H(+). The protein operates within amino-acid biosynthesis; L-histidine biosynthesis; L-histidine from 5-phospho-alpha-D-ribose 1-diphosphate: step 5/9. IGPS catalyzes the conversion of PRFAR and glutamine to IGP, AICAR and glutamate. The HisF subunit catalyzes the cyclization activity that produces IGP and AICAR from PRFAR using the ammonia provided by the HisH subunit. In Bradyrhizobium diazoefficiens (strain JCM 10833 / BCRC 13528 / IAM 13628 / NBRC 14792 / USDA 110), this protein is Imidazole glycerol phosphate synthase subunit HisF.